The sequence spans 541 residues: Chaperonin GroEL 2 (541 aa).

Residues 29-32 (TLGP), 86-90 (DGTTT), glycine 413, 476-478 (NAA), and aspartate 492 contribute to the ATP site.

Belongs to the chaperonin (HSP60) family. Forms a cylinder of 14 subunits composed of two heptameric rings stacked back-to-back. Interacts with the co-chaperonin GroES.

It localises to the secreted. Its subcellular location is the capsule. The protein resides in the cell surface. The protein localises to the cell wall. It carries out the reaction ATP + H2O + a folded polypeptide = ADP + phosphate + an unfolded polypeptide.. Together with its co-chaperonin GroES, plays an essential role in assisting protein folding. The GroEL-GroES system forms a nano-cage that allows encapsulation of the non-native substrate proteins and provides a physical environment optimized to promote and accelerate protein folding. In Mycobacterium sp. (strain KMS), this protein is Chaperonin GroEL 2.